A 1030-amino-acid chain; its full sequence is Zinc finger and SCAN domain-containing protein 20 (1030 aa).

The interval 22 to 42 (DSWGSDSRPEKESHSPVPGPE) is disordered. The SCAN box domain occupies 45–127 (RRCFRQFRYR…ALVEDWHREA (83 aa)). Disordered stretches follow at residues 178–201 (DLSK…PTVP), 213–285 (GKSQ…DSAQ), 411–441 (SGGP…WEPE), and 578–600 (TGLP…GEME). The segment covering 225 to 240 (AKKEPCQDPAGGDRGD) has biased composition (basic and acidic residues). 2 stretches are compositionally biased toward acidic residues: residues 426 to 441 (SDTE…WEPE) and 589 to 600 (EADDQEAWGEME). Residues 697–719 (YGCDTRAKSFSRKVHFFAPQRTH) form a C2H2-type 1; degenerate zinc finger. The C2H2-type 2; degenerate zinc finger occupies 725-747 (YKCLGSGKSFSDRANLSTHQRIH). 2 C2H2-type zinc fingers span residues 753–775 (YRCL…QRTH) and 781–803 (YKCG…QRVH). Disordered stretches follow at residues 801 to 820 (RVHL…NFGQ) and 828 to 850 (WRRN…ADSP). 6 C2H2-type zinc fingers span residues 862–884 (YSCP…QRIH), 890–912 (YECA…RRTH), 918–940 (HKCA…QRVH), 946–968 (YECP…QRIH), 974–996 (YKCR…QRIH), and 1002–1024 (YKCT…RRTH).

It belongs to the krueppel C2H2-type zinc-finger protein family.

It is found in the nucleus. May be involved in transcriptional regulation. This Mus musculus (Mouse) protein is Zinc finger and SCAN domain-containing protein 20 (Zscan20).